Reading from the N-terminus, the 440-residue chain is Signal recognition particle 54 kDa protein (440 aa).

Residues 104–111, 184–188, and 242–245 contribute to the GTP site; these read GLQGSGKT, DTAGR, and TKLD.

It belongs to the GTP-binding SRP family. SRP54 subfamily. In terms of assembly, part of the signal recognition particle protein translocation system, which is composed of SRP and FtsY. Archaeal SRP consists of a 7S RNA molecule of 300 nucleotides and two protein subunits: SRP54 and SRP19.

The protein localises to the cytoplasm. The catalysed reaction is GTP + H2O = GDP + phosphate + H(+). Functionally, involved in targeting and insertion of nascent membrane proteins into the cytoplasmic membrane. Binds to the hydrophobic signal sequence of the ribosome-nascent chain (RNC) as it emerges from the ribosomes. The SRP-RNC complex is then targeted to the cytoplasmic membrane where it interacts with the SRP receptor FtsY. In Methanosarcina acetivorans (strain ATCC 35395 / DSM 2834 / JCM 12185 / C2A), this protein is Signal recognition particle 54 kDa protein.